The following is a 290-amino-acid chain: 2-hydroxy-6-oxo-6-(2'-aminophenyl)hexa-2,4-dienoic acid hydrolase (290 aa).

Active-site residues include serine 114, aspartate 233, and histidine 261.

Belongs to the DmpD/TodF/XylF esterase family. In terms of assembly, homodimer.

It catalyses the reaction (2E,4E)-6-(2-aminophenyl)-2-hydroxy-6-oxohexa-2,4-dienoate + H2O = (2E)-2-hydroxypenta-2,4-dienoate + anthranilate + H(+). Its pathway is xenobiotic degradation; carbazole degradation. Its function is as follows. Involved in the degradation of carbazole, a toxic N-heterocyclic aromatic compound containing dibenzopyrrole system. Catalyzes the hydrolytic cleavage of a carbon-carbon bond of 2-hydroxy-6-oxo-6-(2'-aminophenyl)hexa-2,4-dienoic acid (HOPDA) to yield anthranilate. CarC is specific for 2-hydroxy-6-oxo-6-phenylhexa-2,4-dienoic acid (6-phenyl-HODA), and has little activity toward 2-hydroxy-6-oxohepta-2,4-dienoic acid and 2-hydroxymuconic semialdehyde. The effect of the presence of an amino group or hydroxyl group at the 2'-position of phenyl moiety of 6-phenyl-HODA on the enzyme activity is found to be small. This chain is 2-hydroxy-6-oxo-6-(2'-aminophenyl)hexa-2,4-dienoic acid hydrolase (carC), found in Metapseudomonas resinovorans (Pseudomonas resinovorans).